The primary structure comprises 162 residues: SCF ubiquitin ligase complex protein SKP1b (162 aa).

An N-acetylserine modification is found at serine 2. Residues 100–162 (ILAANYLDIK…NEWCEDKGGN (63 aa)) form an interaction with the F-box domain of F-box proteins region. At proline 143 the chain carries 4-hydroxyproline. An O-linked (GlcNAc...) hydroxyproline glycan is attached at proline 143.

The protein belongs to the SKP1 family. In terms of assembly, multiprotein complex (SCF) with cullin and F-box-containing protein. Capable of undergoing aggregation. Post-translationally, O-linked glycan consists of linear Gal-Gal-Fuc-Gal-GlcNAc. In terms of processing, not glycosylated in prespore cells. FpaA and fpaB seem to be identically glycosylated. Glycosylation is required for nuclear enrichment. Post-translationally, hydroxylated by phyA.

It localises to the cytoplasm. The protein localises to the nucleus. In Dictyostelium discoideum (Social amoeba), this protein is SCF ubiquitin ligase complex protein SKP1b (fpaB-1).